Consider the following 190-residue polypeptide: Xanthine phosphoribosyltransferase (190 aa).

Xanthine contacts are provided by Leu-20 and Asn-27. 129–133 (ANGAA) contacts 5-phospho-alpha-D-ribose 1-diphosphate. Position 157 (Lys-157) interacts with xanthine.

The protein belongs to the purine/pyrimidine phosphoribosyltransferase family. Xpt subfamily. In terms of assembly, homodimer.

Its subcellular location is the cytoplasm. The enzyme catalyses XMP + diphosphate = xanthine + 5-phospho-alpha-D-ribose 1-diphosphate. It functions in the pathway purine metabolism; XMP biosynthesis via salvage pathway; XMP from xanthine: step 1/1. Converts the preformed base xanthine, a product of nucleic acid breakdown, to xanthosine 5'-monophosphate (XMP), so it can be reused for RNA or DNA synthesis. The sequence is that of Xanthine phosphoribosyltransferase from Laribacter hongkongensis (strain HLHK9).